A 468-amino-acid polypeptide reads, in one-letter code: Adenosylhomocysteinase (468 aa).

Residues T57, D132, and E194 each coordinate substrate. An NAD(+)-binding site is contributed by 195–197; the sequence is TTT. Substrate-binding residues include K224 and D228. NAD(+) contacts are provided by residues N229, 258 to 263, E281, N316, 337 to 339, and N382; these read GFGDVG and IGH.

This sequence belongs to the adenosylhomocysteinase family. Requires NAD(+) as cofactor.

The protein resides in the cytoplasm. The enzyme catalyses S-adenosyl-L-homocysteine + H2O = L-homocysteine + adenosine. The protein operates within amino-acid biosynthesis; L-homocysteine biosynthesis; L-homocysteine from S-adenosyl-L-homocysteine: step 1/1. Its function is as follows. May play a key role in the regulation of the intracellular concentration of adenosylhomocysteine. This Methylorubrum populi (strain ATCC BAA-705 / NCIMB 13946 / BJ001) (Methylobacterium populi) protein is Adenosylhomocysteinase.